Reading from the N-terminus, the 962-residue chain is MAFSVVLHQVTFLLAVLSLRTSQSKVLGEPLQLTPEIHTVSLQSALQEANLEWTVPTFSHQELNIVFQIEISRMRTSNTIWVGNYSTTVKHEETVHWKWTSDIPLECATHFIRIRAMVDDAQYPPQSSWSNWSSWKEVNAQVSVPPDTLLIFPEDRLLEEGSNVTICLMIGQNLYNVSCKLQEEPIRGEQLDSHLSLIKLNNVVFLNNAGTNINCKAMNGTKNTFGTVLFVSKVLEEPKNFSCETRDFKTLNCLWEPGIDTTLSWHKQRSQHYTLYESFSGRREVSNHRNSHTWQITEDSQETYNFTLTAENNLRKRSVSISFNLTHRVHPKAPHDVTLKTVGATKAHMTWKVPSRGDYTLLCQVELQCEGEVIHEHNVSVHTSANYLFSDLEPDTEYKACVRCASANHFWKWSDWMQKKFRTPEAAPSEALDVWRDVRTENGRHVVTLFWKPLLKSQANGKIISYNIVVENEANPTESEQYSVRAPALGTNLSLDLHPYKIHISANNSAGASPESLVVLSSHSGHEEVHEKTIKGIKNGFNISWEPVSGDAIGYVVDWCAHSQTQRCDLQWKNVGPNITSTIITSDAFEPGVRYNFRIFERSVEENVRLVEKQRGYTQELAPSVNPGVTIHNLTPNSFSLKWQDYASDFQSGFIKGYLVYLKSKELQCNPNWERTVLSDKSVLCKYDVDDPETKTLTVENLRPESLYEFLVTPYTSAGQGPNETYTKVTTPDVRSHMLLQIILPMTLGVFLSIIVCYWKSQWVKEKCYPDIPNPYKSSILSLIKSKKNPHLIMNVKDCIPDVLEVINKAEGSKTQCVGSGKLHTEDVPTKPPLVPTEKDSSGPMPFVFLENFTYDQSAFDSGSHGFIPGPLKNTPHQLGLLAPPNKLQNVLENDYMKSLVESPTEETSLIYVSQLASPICGDKDSLVTNPPMPVHGSEYKKQMALPGSLTSASLKENNLTS.

The N-terminal stretch at 1–28 is a signal peptide; sequence MAFSVVLHQVTFLLAVLSLRTSQSKVLG. Topologically, residues 29–738 are extracellular; sequence EPLQLTPEIH…VTTPDVRSHM (710 aa). A glycan (N-linked (GlcNAc...) asparagine) is linked at Asn-219. Fibronectin type-III domains lie at 237–332, 333–426, 428–527, 528–621, and 623–734; these read EPKN…VHPK, APHD…TPEA, PSEA…SGHE, EVHE…TQEL, and PSVN…TPDV. The cysteines at positions 243 and 253 are disulfide-linked. N-linked (GlcNAc...) asparagine glycosylation occurs at Asn-324. The WSXWS motif signature appears at 413 to 417; sequence WSDWM. 3 N-linked (GlcNAc...) asparagine glycosylation sites follow: Asn-492, Asn-578, and Asn-723. A helical membrane pass occupies residues 739–759; it reads LLQIILPMTLGVFLSIIVCYW. Topologically, residues 760–962 are cytoplasmic; it reads KSQWVKEKCY…ASLKENNLTS (203 aa). The Box 1 motif signature appears at 768–776; that stretch reads CYPDIPNPY. Positions 818–840 are disordered; that stretch reads VGSGKLHTEDVPTKPPLVPTEKD.

It belongs to the type I cytokine receptor family. Type 2 subfamily. As to quaternary structure, heterodimer composed of OSMR and IL6ST (type II OSM receptor). Heterodimer with IL31RA to form the IL31 receptor. Widely expressed. Expressed at high levels in the liver, skin and spleen. In the liver it is expressed exclusively in the oval cells.

Its subcellular location is the membrane. Functionally, associates with IL31RA to form the IL31 receptor. Binds IL31 and activates STAT1, STAT3 and STAT5. Capable of transducing OSM-specific signaling events. The OSM/OSM-R system is pivotal in the differentiation of oval cells into hepatocytes, thereby promoting liver regeneration. This chain is Oncostatin-M-specific receptor subunit beta (Osmr), found in Rattus norvegicus (Rat).